We begin with the raw amino-acid sequence, 343 residues long: S-adenosylmethionine:tRNA ribosyltransferase-isomerase (343 aa).

It belongs to the QueA family. In terms of assembly, monomer.

The protein resides in the cytoplasm. It carries out the reaction 7-aminomethyl-7-carbaguanosine(34) in tRNA + S-adenosyl-L-methionine = epoxyqueuosine(34) in tRNA + adenine + L-methionine + 2 H(+). It functions in the pathway tRNA modification; tRNA-queuosine biosynthesis. Its function is as follows. Transfers and isomerizes the ribose moiety from AdoMet to the 7-aminomethyl group of 7-deazaguanine (preQ1-tRNA) to give epoxyqueuosine (oQ-tRNA). The chain is S-adenosylmethionine:tRNA ribosyltransferase-isomerase from Coxiella burnetii (strain CbuG_Q212) (Coxiella burnetii (strain Q212)).